Here is a 174-residue protein sequence, read N- to C-terminus: Endoribonuclease YbeY (174 aa).

Zn(2+) contacts are provided by histidine 129, histidine 133, and histidine 139.

This sequence belongs to the endoribonuclease YbeY family. It depends on Zn(2+) as a cofactor.

The protein resides in the cytoplasm. Its function is as follows. Single strand-specific metallo-endoribonuclease involved in late-stage 70S ribosome quality control and in maturation of the 3' terminus of the 16S rRNA. The polypeptide is Endoribonuclease YbeY (Lactobacillus acidophilus (strain ATCC 700396 / NCK56 / N2 / NCFM)).